Reading from the N-terminus, the 398-residue chain is Tryptophan synthase beta chain (398 aa).

The residue at position 88 (lysine 88) is an N6-(pyridoxal phosphate)lysine.

The protein belongs to the TrpB family. In terms of assembly, tetramer of two alpha and two beta chains. Pyridoxal 5'-phosphate is required as a cofactor.

It catalyses the reaction (1S,2R)-1-C-(indol-3-yl)glycerol 3-phosphate + L-serine = D-glyceraldehyde 3-phosphate + L-tryptophan + H2O. It participates in amino-acid biosynthesis; L-tryptophan biosynthesis; L-tryptophan from chorismate: step 5/5. Functionally, the beta subunit is responsible for the synthesis of L-tryptophan from indole and L-serine. The sequence is that of Tryptophan synthase beta chain from Histophilus somni (strain 2336) (Haemophilus somnus).